The following is a 115-amino-acid chain: MKHSVNRPPTPDEDDVADGFEKDKVTLREIINVKLVESGEKENLMELVRDRLVECGWKDEMRIACREHVKKKGRKDVTVDELIRVITPKGRASVPDSVKAELLNRIQNFIVSAAL.

It belongs to the ENY2 family. In terms of assembly, component of a deubiquitination module (DUB module) formed by ENY2, SGF11, and UBP22 in Arabidopsis. Interacts directly with SGF11, but not with UBP22. Interacts with MOS4. In terms of tissue distribution, expressed in roots, cotyledons, leaves and upper part of sepals.

It is found in the nucleus. The protein resides in the nucleoplasm. Functionally, component of a deubiquitination module (DUB module) that specifically deubiquinates monoubiquinated histone H2B (H2Bub). Does not seem to be a component of the TREX-2 complex. Seems to act independently of the SAGA multiprotein complex. The DUB module is responsible for the major H2Bub deubiquitinase activity in Arabidopsis. The chain is Transcription and mRNA export factor ENY2 from Arabidopsis thaliana (Mouse-ear cress).